The sequence spans 192 residues: Shikimate kinase (192 aa).

Residue 26–31 (ASGKSS) coordinates ATP. Ser30 provides a ligand contact to Mg(2+). Residues Asp48, Arg72, and Gly94 each coordinate substrate. An ATP-binding site is contributed by Arg132. Residue Arg151 coordinates substrate.

It belongs to the shikimate kinase family. As to quaternary structure, monomer. Mg(2+) is required as a cofactor.

The protein localises to the cytoplasm. It catalyses the reaction shikimate + ATP = 3-phosphoshikimate + ADP + H(+). The protein operates within metabolic intermediate biosynthesis; chorismate biosynthesis; chorismate from D-erythrose 4-phosphate and phosphoenolpyruvate: step 5/7. Functionally, catalyzes the specific phosphorylation of the 3-hydroxyl group of shikimic acid using ATP as a cosubstrate. In Prochlorococcus marinus (strain MIT 9313), this protein is Shikimate kinase.